Reading from the N-terminus, the 143-residue chain is Large ribosomal subunit protein uL11 (143 aa).

Belongs to the universal ribosomal protein uL11 family. Part of the ribosomal stalk of the 50S ribosomal subunit. Interacts with L10 and the large rRNA to form the base of the stalk. L10 forms an elongated spine to which L12 dimers bind in a sequential fashion forming a multimeric L10(L12)X complex. In terms of processing, one or more lysine residues are methylated.

Functionally, forms part of the ribosomal stalk which helps the ribosome interact with GTP-bound translation factors. This is Large ribosomal subunit protein uL11 from Cellvibrio japonicus (strain Ueda107) (Pseudomonas fluorescens subsp. cellulosa).